Reading from the N-terminus, the 333-residue chain is Adenosine deaminase (333 aa).

The Zn(2+) site is built by histidine 12 and histidine 14. Positions 14, 16, and 170 each coordinate substrate. Histidine 197 contacts Zn(2+). The Proton donor role is filled by glutamate 200. Aspartate 278 contacts Zn(2+). A substrate-binding site is contributed by aspartate 279.

It belongs to the metallo-dependent hydrolases superfamily. Adenosine and AMP deaminases family. Adenosine deaminase subfamily. Zn(2+) serves as cofactor.

It catalyses the reaction adenosine + H2O + H(+) = inosine + NH4(+). It carries out the reaction 2'-deoxyadenosine + H2O + H(+) = 2'-deoxyinosine + NH4(+). Its function is as follows. Catalyzes the hydrolytic deamination of adenosine and 2-deoxyadenosine. The protein is Adenosine deaminase of Shigella boydii serotype 4 (strain Sb227).